The primary structure comprises 316 residues: D-alanine--D-alanine ligase (316 aa).

The ATP-grasp domain maps to 107 to 303; it reads KEVFAARGLT…FEDLVERILI (197 aa). 133 to 188 is a binding site for ATP; that stretch reads AEGFGYPVVVKPSQEGSSVGVSIVKSPEELPSALELAFRYDDDILVERFIKGREIQ. The Mg(2+) site is built by Asp256, Glu269, and Asn271.

Belongs to the D-alanine--D-alanine ligase family. It depends on Mg(2+) as a cofactor. Requires Mn(2+) as cofactor.

Its subcellular location is the cytoplasm. It catalyses the reaction 2 D-alanine + ATP = D-alanyl-D-alanine + ADP + phosphate + H(+). It functions in the pathway cell wall biogenesis; peptidoglycan biosynthesis. Its function is as follows. Cell wall formation. The protein is D-alanine--D-alanine ligase of Geobacter sulfurreducens (strain ATCC 51573 / DSM 12127 / PCA).